The primary structure comprises 83 residues: Protein L83L (83 aa).

The protein belongs to the asfivirus L83L family. As to quaternary structure, interacts with host IL1B.

The protein localises to the host cytoplasm. In terms of biological role, may subvert the host innate immune response by interacting with host IL1B and interfering with its function. This Ornithodoros (relapsing fever ticks) protein is Protein L83L.